The chain runs to 88 residues: Small ribosomal subunit protein bS20 (88 aa).

The tract at residues 1–25 (MANSAQARKRARQATKARAHNASLR) is disordered. Positions 7–19 (ARKRARQATKARA) are enriched in basic residues.

The protein belongs to the bacterial ribosomal protein bS20 family.

Its function is as follows. Binds directly to 16S ribosomal RNA. The polypeptide is Small ribosomal subunit protein bS20 (Azoarcus sp. (strain BH72)).